The following is a 312-amino-acid chain: Ornithine carbamoyltransferase (312 aa).

Carbamoyl phosphate contacts are provided by residues 50-53, Gln-77, Arg-101, and 128-131; these read STRT and HPCQ. Residues Asn-160, Asp-224, and 228–229 each bind L-ornithine; that span reads SM. Carbamoyl phosphate contacts are provided by residues 264–265 and Arg-292; that span reads CL.

Belongs to the aspartate/ornithine carbamoyltransferase superfamily. OTCase family.

It localises to the cytoplasm. The catalysed reaction is carbamoyl phosphate + L-ornithine = L-citrulline + phosphate + H(+). Its pathway is amino-acid biosynthesis; L-arginine biosynthesis; L-arginine from L-ornithine and carbamoyl phosphate: step 1/3. Its function is as follows. Reversibly catalyzes the transfer of the carbamoyl group from carbamoyl phosphate (CP) to the N(epsilon) atom of ornithine (ORN) to produce L-citrulline. The protein is Ornithine carbamoyltransferase of Leifsonia xyli subsp. xyli (strain CTCB07).